Consider the following 322-residue polypeptide: Phosphatidylserine decarboxylase proenzyme (322 aa).

Residues aspartate 90, histidine 147, and serine 254 each act as charge relay system; for autoendoproteolytic cleavage activity in the active site. Serine 254 (schiff-base intermediate with substrate; via pyruvic acid; for decarboxylase activity) is an active-site residue. At serine 254 the chain carries Pyruvic acid (Ser); by autocatalysis. Residues 297–322 (PAPLPAEEIKAEHDASPLVDNKKDDT) are disordered. Positions 303-322 (EEIKAEHDASPLVDNKKDDT) are enriched in basic and acidic residues.

Belongs to the phosphatidylserine decarboxylase family. PSD-B subfamily. Prokaryotic type I sub-subfamily. In terms of assembly, heterodimer of a large membrane-associated beta subunit and a small pyruvoyl-containing alpha subunit. Pyruvate is required as a cofactor. In terms of processing, is synthesized initially as an inactive proenzyme. Formation of the active enzyme involves a self-maturation process in which the active site pyruvoyl group is generated from an internal serine residue via an autocatalytic post-translational modification. Two non-identical subunits are generated from the proenzyme in this reaction, and the pyruvate is formed at the N-terminus of the alpha chain, which is derived from the carboxyl end of the proenzyme. The autoendoproteolytic cleavage occurs by a canonical serine protease mechanism, in which the side chain hydroxyl group of the serine supplies its oxygen atom to form the C-terminus of the beta chain, while the remainder of the serine residue undergoes an oxidative deamination to produce ammonia and the pyruvoyl prosthetic group on the alpha chain. During this reaction, the Ser that is part of the protease active site of the proenzyme becomes the pyruvoyl prosthetic group, which constitutes an essential element of the active site of the mature decarboxylase.

It is found in the cell membrane. The enzyme catalyses a 1,2-diacyl-sn-glycero-3-phospho-L-serine + H(+) = a 1,2-diacyl-sn-glycero-3-phosphoethanolamine + CO2. Its pathway is phospholipid metabolism; phosphatidylethanolamine biosynthesis; phosphatidylethanolamine from CDP-diacylglycerol: step 2/2. Functionally, catalyzes the formation of phosphatidylethanolamine (PtdEtn) from phosphatidylserine (PtdSer). The protein is Phosphatidylserine decarboxylase proenzyme of Salmonella typhi.